The chain runs to 273 residues: Transposon Tn7 transposition protein TnsA (273 aa).

Catalysis depends on residues E63 and E73. The segment at residues 90–108 (TRQIAIDSGIKHPVIRGVD) is a DNA-binding region (H-T-H motif). D114 is an active-site residue. Residues D114, Q130, and V131 each contribute to the Mg(2+) site. Residue K132 is part of the active site.

As to quaternary structure, heteromer with TnsB. Interacts with TnsC (via C-terminus); this interaction allows TnsA to bind donor DNA. Requires Mg(2+) as cofactor. Mn(2+) serves as cofactor.

Its function is as follows. Required for Tn7 transposition. Forms the transposase, together with TnsB. TnsA executes the 5'-DNA strand breakage reaction. TnsABC and TnsD promote high-frequency insertion of Tn7 into a specific target site known as att-Tn7 whereas TnsABC and TnsE promote low-frequency insertion into many different sites. The protein is Transposon Tn7 transposition protein TnsA of Escherichia coli.